The chain runs to 557 residues: Formate--tetrahydrofolate ligase 2 (557 aa).

66-73 (TPAGEGKT) contacts ATP.

It belongs to the formate--tetrahydrofolate ligase family.

The catalysed reaction is (6S)-5,6,7,8-tetrahydrofolate + formate + ATP = (6R)-10-formyltetrahydrofolate + ADP + phosphate. It participates in one-carbon metabolism; tetrahydrofolate interconversion. This is Formate--tetrahydrofolate ligase 2 from Streptococcus pyogenes serotype M6 (strain ATCC BAA-946 / MGAS10394).